Consider the following 258-residue polypeptide: Acetylglutamate kinase (258 aa).

Substrate is bound by residues 41–42 (GG), Arg63, and Asn156.

The protein belongs to the acetylglutamate kinase family. ArgB subfamily.

The protein localises to the cytoplasm. The enzyme catalyses N-acetyl-L-glutamate + ATP = N-acetyl-L-glutamyl 5-phosphate + ADP. Its pathway is amino-acid biosynthesis; L-arginine biosynthesis; N(2)-acetyl-L-ornithine from L-glutamate: step 2/4. Catalyzes the ATP-dependent phosphorylation of N-acetyl-L-glutamate. The polypeptide is Acetylglutamate kinase (Bacillus velezensis (strain DSM 23117 / BGSC 10A6 / LMG 26770 / FZB42) (Bacillus amyloliquefaciens subsp. plantarum)).